A 516-amino-acid polypeptide reads, in one-letter code: GPI mannosyltransferase 4 (516 aa).

The Lumenal segment spans residues Met1–Gln5. Residues Trp6–His26 form a helical membrane-spanning segment. Residues Pro27–Ser60 lie on the Cytoplasmic side of the membrane. Residues Tyr61–Ile81 traverse the membrane as a helical segment. At Gln82–Val175 the chain is on the lumenal side. Residues Ile176–Phe196 traverse the membrane as a helical segment. Over Leu197–His210 the chain is Cytoplasmic. The helical transmembrane segment at Trp211–Ile231 threads the bilayer. The Lumenal portion of the chain corresponds to Asp232 to His270. Residues Leu271–Tyr291 traverse the membrane as a helical segment. Over Lys292 to Lys295 the chain is Cytoplasmic. The chain crosses the membrane as a helical span at residues Leu296 to Leu316. Arg317 is a topological domain (lumenal). The chain crosses the membrane as a helical span at residues Phe318 to Thr338. At Leu339–Thr348 the chain is on the cytoplasmic side. Residues Trp349–Ile369 traverse the membrane as a helical segment. Residues Gln370–Leu516 are Lumenal-facing. 2 N-linked (GlcNAc...) asparagine glycosylation sites follow: Asn403 and Asn452.

It belongs to the glycosyltransferase 22 family. PIGZ subfamily.

The protein resides in the endoplasmic reticulum membrane. It participates in glycolipid biosynthesis; glycosylphosphatidylinositol-anchor biosynthesis. In terms of biological role, alpha-1,2-mannosyltransferase involved in glycosylphosphatidylinositol-anchor biosynthesis. Transfers a fourth mannose to trimannosyl-GPIs during GPI precursor assembly. The presence of a fourth mannose in GPI is essential in fungi. Involved in plasmid maintenance with SMP2. In Saccharomyces cerevisiae (strain ATCC 204508 / S288c) (Baker's yeast), this protein is GPI mannosyltransferase 4 (SMP3).